The following is a 141-amino-acid chain: MAKKVIKMVKLQIPAGKANPAPPVGPALGQAGVNIMGFCKEFNARTADQAGLIIPVEITVFEDRSFTFITKTPPAAVLLKKVAGIESGSGEPNRNKVATVKRDKVREIAETKMPDLNAASVEAAMRMVEGTARSMGIVIED.

The protein belongs to the universal ribosomal protein uL11 family. Part of the ribosomal stalk of the 50S ribosomal subunit. Interacts with L10 and the large rRNA to form the base of the stalk. L10 forms an elongated spine to which L12 dimers bind in a sequential fashion forming a multimeric L10(L12)X complex. One or more lysine residues are methylated.

Functionally, forms part of the ribosomal stalk which helps the ribosome interact with GTP-bound translation factors. This chain is Large ribosomal subunit protein uL11, found in Bacillus cereus (strain ATCC 10987 / NRS 248).